Consider the following 447-residue polypeptide: uncharacterized protein (447 aa).

The region spanning 29–201 (VDVYPLVFVF…TQYTFKVHRA (173 aa)) is the FAD-binding PCMH-type domain.

It belongs to the oxygen-dependent FAD-linked oxidoreductase family. Requires FAD as cofactor.

It localises to the spore coat. This is an uncharacterized protein from Bacillus subtilis (strain 168).